The sequence spans 113 residues: Large ribosomal subunit protein uL22 (113 aa).

Belongs to the universal ribosomal protein uL22 family. As to quaternary structure, part of the 50S ribosomal subunit.

Functionally, this protein binds specifically to 23S rRNA; its binding is stimulated by other ribosomal proteins, e.g. L4, L17, and L20. It is important during the early stages of 50S assembly. It makes multiple contacts with different domains of the 23S rRNA in the assembled 50S subunit and ribosome. In terms of biological role, the globular domain of the protein is located near the polypeptide exit tunnel on the outside of the subunit, while an extended beta-hairpin is found that lines the wall of the exit tunnel in the center of the 70S ribosome. This Natranaerobius thermophilus (strain ATCC BAA-1301 / DSM 18059 / JW/NM-WN-LF) protein is Large ribosomal subunit protein uL22.